A 151-amino-acid polypeptide reads, in one-letter code: Large ribosomal subunit protein bL9 (151 aa).

This sequence belongs to the bacterial ribosomal protein bL9 family.

Its function is as follows. Binds to the 23S rRNA. The sequence is that of Large ribosomal subunit protein bL9 from Pelodictyon phaeoclathratiforme (strain DSM 5477 / BU-1).